Here is a 52-residue protein sequence, read N- to C-terminus: DNA-directed RNA polymerase subunit Rpo12 (52 aa).

Positions 13, 30, and 33 each coordinate Zn(2+).

Belongs to the archaeal Rpo12/eukaryotic RPC10 RNA polymerase subunit family. In terms of assembly, part of the RNA polymerase complex. The cofactor is Zn(2+).

The protein localises to the cytoplasm. The catalysed reaction is RNA(n) + a ribonucleoside 5'-triphosphate = RNA(n+1) + diphosphate. DNA-dependent RNA polymerase (RNAP) catalyzes the transcription of DNA into RNA using the four ribonucleoside triphosphates as substrates. In Pyrobaculum neutrophilum (strain DSM 2338 / JCM 9278 / NBRC 100436 / V24Sta) (Thermoproteus neutrophilus), this protein is DNA-directed RNA polymerase subunit Rpo12.